The primary structure comprises 78 residues: Large ribosomal subunit protein bL28 (78 aa).

The protein belongs to the bacterial ribosomal protein bL28 family.

In Ruthia magnifica subsp. Calyptogena magnifica, this protein is Large ribosomal subunit protein bL28.